The chain runs to 230 residues: Large ribosomal subunit protein uL1 (230 aa).

This sequence belongs to the universal ribosomal protein uL1 family. In terms of assembly, part of the 50S ribosomal subunit.

Its function is as follows. Binds directly to 23S rRNA. The L1 stalk is quite mobile in the ribosome, and is involved in E site tRNA release. Functionally, protein L1 is also a translational repressor protein, it controls the translation of the L11 operon by binding to its mRNA. The protein is Large ribosomal subunit protein uL1 of Bradyrhizobium diazoefficiens (strain JCM 10833 / BCRC 13528 / IAM 13628 / NBRC 14792 / USDA 110).